The following is a 430-amino-acid chain: tRNA(Ile)-lysidine synthase (430 aa).

27-32 (SGGSDS) is a binding site for ATP.

Belongs to the tRNA(Ile)-lysidine synthase family.

Its subcellular location is the cytoplasm. It carries out the reaction cytidine(34) in tRNA(Ile2) + L-lysine + ATP = lysidine(34) in tRNA(Ile2) + AMP + diphosphate + H(+). Functionally, ligates lysine onto the cytidine present at position 34 of the AUA codon-specific tRNA(Ile) that contains the anticodon CAU, in an ATP-dependent manner. Cytidine is converted to lysidine, thus changing the amino acid specificity of the tRNA from methionine to isoleucine. This is tRNA(Ile)-lysidine synthase from Rickettsia bellii (strain RML369-C).